Here is a 956-residue protein sequence, read N- to C-terminus: Lon protease homolog, mitochondrial 1 (956 aa).

Disordered regions lie at residues 37–57 and 83–123; these read NNNN…NNNN and KKKG…GNEK. Residues 91 to 123 show a composition bias toward basic and acidic residues; the sequence is NNDDNDNEKNEKNEKKVKNEKKEKNEKNDGNEK. Positions 159-357 constitute a Lon N-terminal domain; the sequence is VVIYPSNSVN…MLYHMILNEQ (199 aa). Position 511–518 (511–518) interacts with ATP; sequence GPPGTGKT. In terms of domain architecture, Lon proteolytic spans 747 to 945; the sequence is VTPIGVVNGL…KDVFEVAFPN (199 aa). Positions 777 to 795 are enriched in low complexity; that stretch reads KPLSSLPPSQQQQNQLEPS. The disordered stretch occupies residues 777–800; that stretch reads KPLSSLPPSQQQQNQLEPSIKTTG. Active-site residues include serine 851 and lysine 894.

The protein belongs to the peptidase S16 family. In terms of assembly, homohexamer or homoheptamer. Organized in a ring with a central cavity.

The protein resides in the mitochondrion matrix. It catalyses the reaction Hydrolysis of proteins in presence of ATP.. In terms of biological role, ATP-dependent serine protease that mediates the selective degradation of misfolded, unassembled or oxidatively damaged polypeptides as well as certain short-lived regulatory proteins in the mitochondrial matrix. May also have a chaperone function in the assembly of inner membrane protein complexes. Participates in the regulation of mitochondrial gene expression and in the maintenance of the integrity of the mitochondrial genome. Binds to mitochondrial DNA in a site-specific manner. This Dictyostelium discoideum (Social amoeba) protein is Lon protease homolog, mitochondrial 1.